Consider the following 60-residue polypeptide: Large ribosomal subunit protein bL32 (60 aa).

The disordered stretch occupies residues 1–27; it reads MAVPRNRLSNARKNSKRAHHAKKPKSL. Residues 13–25 are compositionally biased toward basic residues; that stretch reads KNSKRAHHAKKPK.

This sequence belongs to the bacterial ribosomal protein bL32 family.

The polypeptide is Large ribosomal subunit protein bL32 (Protochlamydia amoebophila (strain UWE25)).